We begin with the raw amino-acid sequence, 613 residues long: Laccase 1 (613 aa).

A signal peptide spans 1 to 20 (MSRFARLLLIVALFFTGAWA). Plastocyanin-like domains lie at 29–142 (ITWK…IRPK) and 171–359 (YLVV…MRIP). N-linked (GlcNAc...) asparagine glycosylation is present at asparagine 74. Cu cation contacts are provided by histidine 78, histidine 80, histidine 122, and histidine 124. N-linked (GlcNAc...) asparagine glycosylation is found at asparagine 256, asparagine 279, asparagine 444, asparagine 468, and asparagine 484. The Plastocyanin-like 3 domain maps to 468–598 (NATRDTENDG…GGMGIAILDG (131 aa)). The Cu cation site is built by histidine 506, histidine 509, and histidine 511. Asparagine 526 is a glycosylation site (N-linked (GlcNAc...) asparagine). Cu cation is bound by residues histidine 580, cysteine 581, histidine 582, and histidine 586.

It belongs to the multicopper oxidase family. It depends on Cu cation as a cofactor.

Its subcellular location is the cell surface. It functions in the pathway pigment biosynthesis. In terms of biological role, laccase; part of the Pks1 gene cluster that mediates the biosynthesis of an anthraquinone derivative pigment that contributes to conidial pigmentation that provides protection from UV radiation, heat and cold stress. The polyketide synthase Pks1 produces 1-acetyl-2,4,6,8-tetrahydroxy-9,10-anthraquinone though condensation of acetyl-CoA with malonyl-CoA. The dehydratase EthD and the laccase Mlac1 further convert the anthraquinone derivative into the final conidial pigment. The sequence is that of Laccase 1 from Metarhizium guizhouense (strain ARSEF 977).